The following is a 153-amino-acid chain: UPF0743 protein YCR087C-A (153 aa).

C2HC LYAR-type zinc fingers lie at residues 1–26 (MVTF…YRCP) and 27–52 (NAYY…TSCI). C6, C9, H21, C25, C32, C35, H48, and C51 together coordinate Zn(2+). The segment at 63–96 (YKGNKKQKQKQQQKQQQKQHQHQPVATPAKKVEK) is disordered. Residues 65–83 (GNKKQKQKQQQKQQQKQHQ) are compositionally biased toward basic residues.

This sequence belongs to the UPF0743 family.

It localises to the nucleus. It is found in the nucleolus. This is UPF0743 protein YCR087C-A from Saccharomyces cerevisiae (strain ATCC 204508 / S288c) (Baker's yeast).